The following is a 182-amino-acid chain: Adenine phosphoribosyltransferase (182 aa).

The protein belongs to the purine/pyrimidine phosphoribosyltransferase family. Homodimer.

Its subcellular location is the cytoplasm. The enzyme catalyses AMP + diphosphate = 5-phospho-alpha-D-ribose 1-diphosphate + adenine. It functions in the pathway purine metabolism; AMP biosynthesis via salvage pathway; AMP from adenine: step 1/1. In terms of biological role, catalyzes a salvage reaction resulting in the formation of AMP, that is energically less costly than de novo synthesis. The sequence is that of Adenine phosphoribosyltransferase from Wolinella succinogenes (strain ATCC 29543 / DSM 1740 / CCUG 13145 / JCM 31913 / LMG 7466 / NCTC 11488 / FDC 602W) (Vibrio succinogenes).